The chain runs to 94 residues: MKISKEQVATIARLARLDLDEARLERFAGQFGDILDYMDMLGAVDTTDVEPLYSPSEHGTVLRADEVHTHCTREELLANAPESDGQFFVVPRIV.

This sequence belongs to the GatC family. In terms of assembly, heterotrimer of A, B and C subunits.

The catalysed reaction is L-glutamyl-tRNA(Gln) + L-glutamine + ATP + H2O = L-glutaminyl-tRNA(Gln) + L-glutamate + ADP + phosphate + H(+). It carries out the reaction L-aspartyl-tRNA(Asn) + L-glutamine + ATP + H2O = L-asparaginyl-tRNA(Asn) + L-glutamate + ADP + phosphate + 2 H(+). Its function is as follows. Allows the formation of correctly charged Asn-tRNA(Asn) or Gln-tRNA(Gln) through the transamidation of misacylated Asp-tRNA(Asn) or Glu-tRNA(Gln) in organisms which lack either or both of asparaginyl-tRNA or glutaminyl-tRNA synthetases. The reaction takes place in the presence of glutamine and ATP through an activated phospho-Asp-tRNA(Asn) or phospho-Glu-tRNA(Gln). This Nitratidesulfovibrio vulgaris (strain ATCC 29579 / DSM 644 / CCUG 34227 / NCIMB 8303 / VKM B-1760 / Hildenborough) (Desulfovibrio vulgaris) protein is Aspartyl/glutamyl-tRNA(Asn/Gln) amidotransferase subunit C.